A 272-amino-acid chain; its full sequence is Heat stress transcription factor A-7a (272 aa).

Residues 1–26 (MMNPFLPEGCDPPPPPQPMEGLHENA) form a disordered region. A DNA-binding region spans residues 27–121 (PPPFLTKTFE…LLKNIKRRNP (95 aa)). The interval 132 to 186 (ACNELRREKQVLMMEIVSLRQQQQTTKSYIKAMEQRIEGTERKQRQMMSFLARAM) is hydrophobic repeat HR-A/B. Residues 201-216 (KKIKELEDNESAKRKR) carry the Bipartite nuclear localization signal motif. Residues 203-212 (IKELEDNESA) show a composition bias toward basic and acidic residues. The disordered stretch occupies residues 203-223 (IKELEDNESAKRKRGSSSMSE). Positions 256–265 (DGFWEELLSD) match the AHA motif.

The protein belongs to the HSF family. Class A subfamily. Homotrimer. In terms of processing, exhibits temperature-dependent phosphorylation.

It is found in the nucleus. Transcriptional activator that specifically binds DNA sequence 5'-AGAAnnTTCT-3' known as heat shock promoter elements (HSE). This is Heat stress transcription factor A-7a (HSFA7A) from Arabidopsis thaliana (Mouse-ear cress).